A 655-amino-acid chain; its full sequence is tRNA uridine 5-carboxymethylaminomethyl modification enzyme MnmG (655 aa).

An FAD-binding site is contributed by 13–18 (GGGHAG). NAD(+) is bound at residue 281–295 (GPRYCPSVEDKINRF).

It belongs to the MnmG family. Homodimer. Heterotetramer of two MnmE and two MnmG subunits. It depends on FAD as a cofactor.

It localises to the cytoplasm. Functionally, NAD-binding protein involved in the addition of a carboxymethylaminomethyl (cmnm) group at the wobble position (U34) of certain tRNAs, forming tRNA-cmnm(5)s(2)U34. The protein is tRNA uridine 5-carboxymethylaminomethyl modification enzyme MnmG of Paracidovorax citrulli (strain AAC00-1) (Acidovorax citrulli).